Reading from the N-terminus, the 435-residue chain is Methylenetetrahydrofolate--tRNA-(uracil-5-)-methyltransferase TrmFO (435 aa).

9–14 (GAGLAG) serves as a coordination point for FAD.

It belongs to the MnmG family. TrmFO subfamily. Requires FAD as cofactor.

It localises to the cytoplasm. It catalyses the reaction uridine(54) in tRNA + (6R)-5,10-methylene-5,6,7,8-tetrahydrofolate + NADH + H(+) = 5-methyluridine(54) in tRNA + (6S)-5,6,7,8-tetrahydrofolate + NAD(+). The enzyme catalyses uridine(54) in tRNA + (6R)-5,10-methylene-5,6,7,8-tetrahydrofolate + NADPH + H(+) = 5-methyluridine(54) in tRNA + (6S)-5,6,7,8-tetrahydrofolate + NADP(+). Functionally, catalyzes the folate-dependent formation of 5-methyl-uridine at position 54 (M-5-U54) in all tRNAs. The chain is Methylenetetrahydrofolate--tRNA-(uracil-5-)-methyltransferase TrmFO from Staphylococcus aureus (strain Newman).